The chain runs to 357 residues: MAGNTIGQLFRVTTFGESHGIALGCIVDGVPPNLELSEKDIQPDLDRRKPGTSRYTTPRREDDEVQILSGVFEGKTTGTSIGMIIKNGDQRSQDYGDIKDRFRPGHADFTYQQKYGIRDYRGGGRSSARETAMRVAAGAIAKKYLREHFGIEVRGFLSQIGHVKVAPQTIGDIDWEKVNSNPFFCPDESAVEKFDELIRELKKEGDSIGAKLTVIAENVPVGLGEPVFDRLDADLAHALMGINAVKGVEIGDGFAVVEQRGSEHRDEMTPDGFESNHAGGILGGISSGQPIIATIALKPTSSITIPGRSINLKGEAVEVVTKGRHDPCVGIRAVPIAEAMMAIVLLDHLLRFKAQCK.

Residues 38-49 (EKDIQPDLDRRK) are compositionally biased toward basic and acidic residues. A disordered region spans residues 38–60 (EKDIQPDLDRRKPGTSRYTTPRR). NADP(+)-binding residues include R48 and R54. FMN-binding positions include 125–127 (RSS), 243–244 (NA), G283, 298–302 (KPTSS), and R324.

The protein belongs to the chorismate synthase family. As to quaternary structure, homotetramer. Requires FMNH2 as cofactor.

The catalysed reaction is 5-O-(1-carboxyvinyl)-3-phosphoshikimate = chorismate + phosphate. Its pathway is metabolic intermediate biosynthesis; chorismate biosynthesis; chorismate from D-erythrose 4-phosphate and phosphoenolpyruvate: step 7/7. Its function is as follows. Catalyzes the anti-1,4-elimination of the C-3 phosphate and the C-6 proR hydrogen from 5-enolpyruvylshikimate-3-phosphate (EPSP) to yield chorismate, which is the branch point compound that serves as the starting substrate for the three terminal pathways of aromatic amino acid biosynthesis. This reaction introduces a second double bond into the aromatic ring system. The sequence is that of Chorismate synthase from Haemophilus influenzae (strain PittGG).